Reading from the N-terminus, the 396-residue chain is MAAEPPALRLRPPGSTGDSPPVPRLLGGCVPLSHQVAGHMYGKDKVGILQHPDGTVLKQLQPPPRGPRELEFYTMVYAADCADAVLLELRKHLPKYYGVWSPPTAPNDVYLKLEDVTHKFNKPCIMDVKIGRKSYDPFASSEKIQQQVSKYPLMEEIGFLVLGMRVYHLHSDSYETQNQHYGRGLTKETLKEGVSKFFHNGFCLRKDAIAASIQKVEKILQWFENQKQLNFYASSLLFVYEGSSQPATTKANDRTLAGRFLSKGPLTDADGLECNNNFHLFGAPPNGMSVGKSLSKAYSRHRKLYAKKHQSQTSLKVETLEQDNGWRSMSQEHLNGNVLAQLEKVFYHLPAGRPEIPEAEVRMIDFAHVFPSNTVDEGYVYGLKHLIAVLRSILDS.

The segment covering 1–13 (MAAEPPALRLRPP) has biased composition (low complexity). Positions 1 to 22 (MAAEPPALRLRPPGSTGDSPPV) are disordered. A2 bears the N-acetylalanine mark. S19 bears the Phosphoserine mark. K58 lines the ATP pocket. R65 is a substrate binding site. ATP-binding positions include 114–116 (EDV) and D127. Residues K129, 143-150 (KIQQQVSK), and Q179 each bind substrate. A Nuclear localization signal motif is present at residues 300–310 (RHRKLYAKKHQ). D365 is an ATP binding site.

This sequence belongs to the inositol phosphokinase (IPK) family. The cofactor is Mg(2+).

It is found in the nucleus. The catalysed reaction is 1D-myo-inositol 1,4,5-trisphosphate + 2 ATP = 1D-myo-inositol 1,3,4,5,6-pentakisphosphate + 2 ADP + 2 H(+). The enzyme catalyses 1D-myo-inositol 1,3,4,6-tetrakisphosphate + ATP = 1D-myo-inositol 1,3,4,5,6-pentakisphosphate + ADP + H(+). It catalyses the reaction 1-octadecanoyl-2-(5Z,8Z,11Z,14Z)-eicosatetraenoyl-sn-glycero-3-phospho-1D-myo-inositol 4,5-bisphosphate + ATP = 1-octadecanoyl-2-(5Z,8Z,11Z,14Z-eicosatetraenoyl)-sn-glycero-3-phospho-(1D-myo-inositol 3,4,5-triphosphate) + ADP + H(+). It carries out the reaction a 1,2-diacyl-sn-glycero-3-phospho-(1D-myo-inositol-4,5-bisphosphate) + ATP = a 1,2-diacyl-sn-glycero-3-phospho-(1D-myo-inositol-3,4,5-trisphosphate) + ADP + H(+). The catalysed reaction is 1D-myo-inositol 1,4,5,6-tetrakisphosphate + ATP = 1D-myo-inositol 1,3,4,5,6-pentakisphosphate + ADP + H(+). Its pathway is phospholipid metabolism; phosphatidylinositol metabolism. Functionally, inositol phosphate kinase with a broad substrate specificity. Phosphorylates inositol 1,4,5-trisphosphate (Ins(1,4,5)P3) first to inositol 1,3,4,5-tetrakisphosphate and then to inositol 1,3,4,5,6-pentakisphosphate (Ins(1,3,4,5,6)P5). Phosphorylates inositol 1,3,4,6-tetrakisphosphate (Ins(1,3,4,6)P4). Phosphorylates inositol 1,4,5,6-tetrakisphosphate (Ins(1,4,5,6)P4). Phosphorylates glycero-3-phospho-1D-myo-inositol 4,5-bisphosphate to glycero-3-phospho-1D-myo-inositol 3,4,5-trisphosphate. Plays an important role in MLKL-mediated necroptosis via its role in the biosynthesis of inositol pentakisphosphate (InsP5) and inositol hexakisphosphate (InsP6). Binding of these highly phosphorylated inositol phosphates to MLKL mediates the release of an N-terminal auto-inhibitory region, leading to activation of the kinase. Essential for activated phospho-MLKL to oligomerize and localize to the cell membrane during necroptosis. Required for normal embryonic development, probably via its role in the biosynthesis of inositol 1,3,4,5,6-pentakisphosphate (Ins(1,3,4,5,6)P5) and inositol hexakisphosphate (InsP6). The protein is Inositol polyphosphate multikinase (Ipmk) of Mus musculus (Mouse).